A 157-amino-acid polypeptide reads, in one-letter code: Acetyltransferase PseH (157 aa).

One can recognise an N-acetyltransferase domain in the interval 5–152 (KNFTELNSQE…YHICLKQSDC (148 aa)).

Its function is as follows. Catalyzes the third step in the biosynthesis of pseudaminic acid, a sialic-acid-like sugar that is used to modify flagellin. Mediates N-4 acetylation of UDP-4-amino-4,6-dideoxy-beta-L-AltNAc to form UDP-2,4-diacetamido-2,4,6-trideoxy-beta-L-altropyranose. The protein is Acetyltransferase PseH (pseH) of Campylobacter jejuni subsp. jejuni serotype O:23/36 (strain 81-176).